Consider the following 671-residue polypeptide: DNA ligase (671 aa).

Residues 32–36 (DAEYD), 81–82 (SL), and E113 each bind NAD(+). K115 functions as the N6-AMP-lysine intermediate in the catalytic mechanism. Residues R136, E173, K290, and K314 each coordinate NAD(+). C408, C411, C426, and C432 together coordinate Zn(2+). Positions 593–671 (EIDSPFAGKT…EAEMIRLLGA (79 aa)) constitute a BRCT domain.

The protein belongs to the NAD-dependent DNA ligase family. LigA subfamily. Mg(2+) serves as cofactor. Requires Mn(2+) as cofactor.

It carries out the reaction NAD(+) + (deoxyribonucleotide)n-3'-hydroxyl + 5'-phospho-(deoxyribonucleotide)m = (deoxyribonucleotide)n+m + AMP + beta-nicotinamide D-nucleotide.. In terms of biological role, DNA ligase that catalyzes the formation of phosphodiester linkages between 5'-phosphoryl and 3'-hydroxyl groups in double-stranded DNA using NAD as a coenzyme and as the energy source for the reaction. It is essential for DNA replication and repair of damaged DNA. In Salmonella paratyphi A (strain ATCC 9150 / SARB42), this protein is DNA ligase.